Reading from the N-terminus, the 200-residue chain is MNNIFSKLRDFVGLNEQVEYEYYEEEPETDNNYQNLYQQENPQPPAPQESATAQNRRWREPVPTMGDDIAAGSKPMGNVIGMPGAINGISEVLVLEPRTFEEMPQAIQALRERKSVVLNLTIMDPDQAQRAVDFVAGGTYALDGHQERIGESIFLFTPSCVQVSTQGGVLHEVPQPPARPSRPTGSPNQTWGNETNRMAQ.

Disordered regions lie at residues 35–60 and 170–200; these read NLYQQENPQPPAPQESATAQNRRWRE and LHEVPQPPARPSRPTGSPNQTWGNETNRMAQ. Positions 183-200 are enriched in polar residues; sequence PTGSPNQTWGNETNRMAQ.

It belongs to the SepF family. As to quaternary structure, homodimer. Interacts with FtsZ.

Its subcellular location is the cytoplasm. Functionally, cell division protein that is part of the divisome complex and is recruited early to the Z-ring. Probably stimulates Z-ring formation, perhaps through the cross-linking of FtsZ protofilaments. Its function overlaps with FtsA. The chain is Cell division protein SepF from Nostoc punctiforme (strain ATCC 29133 / PCC 73102).